The sequence spans 133 residues: Large ribosomal subunit protein bL17 (133 aa).

The protein belongs to the bacterial ribosomal protein bL17 family. As to quaternary structure, part of the 50S ribosomal subunit. Contacts protein L32.

This chain is Large ribosomal subunit protein bL17, found in Nitratidesulfovibrio vulgaris (strain DSM 19637 / Miyazaki F) (Desulfovibrio vulgaris).